Here is a 252-residue protein sequence, read N- to C-terminus: Ubiquitin carboxyl-terminal hydrolase isozyme L1 (252 aa).

An N-acetylmethionine modification is found at Met-1. Positions 2–250 (QLKPMEINPE…VRFSAVALCK (249 aa)) constitute a UCH catalytic domain. Residues 5-10 (PMEINP) form an interaction with ubiquitin region. The active-site Nucleophile is the Cys-119. Ser-154 is modified (phosphoserine). The Proton donor role is filled by His-190. Residues 240–245 (EVRFSA) are interaction with ubiquitin. Residue Cys-249 is the site of S-farnesyl cysteine attachment. Residues 250–252 (KAA) constitute a propeptide, removed in mature form.

Belongs to the peptidase C12 family. Monomer. Homodimer. Interacts with COPS5 and SNCA. O-glycosylated. As to expression, neurons and cells of the diffuse neuroendocrine system and their tumors.

It is found in the cytoplasm. The protein resides in the endoplasmic reticulum membrane. It catalyses the reaction Thiol-dependent hydrolysis of ester, thioester, amide, peptide and isopeptide bonds formed by the C-terminal Gly of ubiquitin (a 76-residue protein attached to proteins as an intracellular targeting signal).. Its function is as follows. Ubiquitin-protein hydrolase involved both in the processing of ubiquitin precursors and of ubiquitinated proteins. This enzyme is a thiol protease that recognizes and hydrolyzes a peptide bond at the C-terminal glycine of ubiquitin. Also binds to free monoubiquitin and may prevent its degradation in lysosomes. The homodimer may have ATP-independent ubiquitin ligase activity. This Bos taurus (Bovine) protein is Ubiquitin carboxyl-terminal hydrolase isozyme L1 (UCHL1).